The chain runs to 431 residues: 5-methylthioadenosine/S-adenosylhomocysteine deaminase (431 aa).

Residues histidine 66 and histidine 68 each coordinate Zn(2+). Residues glutamate 95, arginine 147, and histidine 185 each contribute to the substrate site. Histidine 212 contributes to the Zn(2+) binding site. Substrate-binding residues include glutamate 215 and aspartate 300. Aspartate 300 is a Zn(2+) binding site.

This sequence belongs to the metallo-dependent hydrolases superfamily. MTA/SAH deaminase family. Zn(2+) is required as a cofactor.

The catalysed reaction is S-adenosyl-L-homocysteine + H2O + H(+) = S-inosyl-L-homocysteine + NH4(+). It catalyses the reaction S-methyl-5'-thioadenosine + H2O + H(+) = S-methyl-5'-thioinosine + NH4(+). Catalyzes the deamination of 5-methylthioadenosine and S-adenosyl-L-homocysteine into 5-methylthioinosine and S-inosyl-L-homocysteine, respectively. Is also able to deaminate adenosine. The polypeptide is 5-methylthioadenosine/S-adenosylhomocysteine deaminase (Desulfitobacterium hafniense (strain DSM 10664 / DCB-2)).